Reading from the N-terminus, the 418-residue chain is AP-3 complex subunit mu-2 (418 aa).

The MHD domain maps to Asn176–Arg417.

The protein belongs to the adaptor complexes medium subunit family. As to quaternary structure, adaptor protein complex 3 (AP-3) is a heterotetramer composed of two large adaptins (delta-type subunit AP3D1 and beta-type subunit AP3B1 or AP3B2), a medium adaptin (mu-type subunit AP3M1 or AP3M2) and a small adaptin (sigma-type subunit APS1 or AP3S2). AP-3 associates with the BLOC-1 complex.

The protein resides in the golgi apparatus. It localises to the cytoplasmic vesicle membrane. Functionally, component of the adaptor complexes which link clathrin to receptors in coated vesicles. Clathrin-associated protein complexes are believed to interact with the cytoplasmic tails of membrane proteins, leading to their selection and concentration. Ap47 is a subunit of the plasma membrane adaptor. In concert with the BLOC-1 complex, AP-3 is required to target cargos into vesicles assembled at cell bodies for delivery into neurites and nerve terminals. This chain is AP-3 complex subunit mu-2 (Ap3m2), found in Mus musculus (Mouse).